A 289-amino-acid chain; its full sequence is 2-hydroxy-6-oxononadienedioate/2-hydroxy-6-oxononatrienedioate hydrolase 1 (289 aa).

One can recognise an AB hydrolase-1 domain in the interval 39–275; it reads TVVMLHGSGP…RCGHWAQWEH (237 aa). His269 acts as the Proton acceptor in catalysis.

It belongs to the AB hydrolase superfamily. MhpC family. Homodimer.

It catalyses the reaction (2Z,4E)-2-hydroxy-6-oxonona-2,4-dienedioate + H2O = (2Z)-2-hydroxypenta-2,4-dienoate + succinate + H(+). The enzyme catalyses (2Z,4E,7E)-2-hydroxy-6-oxonona-2,4,7-trienedioate + H2O = (2Z)-2-hydroxypenta-2,4-dienoate + fumarate + H(+). It functions in the pathway aromatic compound metabolism; 3-phenylpropanoate degradation. Functionally, catalyzes the cleavage of the C5-C6 bond of 2-hydroxy-6-oxononadienedioate and 2-hydroxy-6-oxononatrienedioate, a dienol ring fission product of the bacterial meta-cleavage pathway for degradation of phenylpropionic acid. The protein is 2-hydroxy-6-oxononadienedioate/2-hydroxy-6-oxononatrienedioate hydrolase 1 of Dechloromonas aromatica (strain RCB).